The sequence spans 85 residues: MYIVVVYDVGVERVNKVKKFLRMHLNWVQNSVFEGEVTLAEFERIKEGLKKIIDENSDSVIIYKLRSMPPRETLGIEKNPIEEII.

Asp-8 contributes to the Mg(2+) binding site.

It belongs to the CRISPR-associated endoribonuclease Cas2 protein family. Homodimer, forms a heterotetramer with a Cas1 homodimer. Mg(2+) serves as cofactor.

CRISPR (clustered regularly interspaced short palindromic repeat), is an adaptive immune system that provides protection against mobile genetic elements (viruses, transposable elements and conjugative plasmids). CRISPR clusters contain sequences complementary to antecedent mobile elements and target invading nucleic acids. CRISPR clusters are transcribed and processed into CRISPR RNA (crRNA). Functions as a ssRNA-specific endoribonuclease. Involved in the integration of spacer DNA into the CRISPR cassette. The sequence is that of CRISPR-associated endoribonuclease Cas2 from Pyrococcus furiosus (strain ATCC 43587 / DSM 3638 / JCM 8422 / Vc1).